The primary structure comprises 316 residues: Bifunctional peptidase and (3S)-lysyl hydroxylase Jmjd7 (316 aa).

Residues 128-307 form the JmjC domain; the sequence is VQKQCSNLPT…LKYSYFQLMD (180 aa). Residues His178, Asp180, and His277 each coordinate Fe cation.

As to quaternary structure, homodimer; disulfide-linked. Interacts with DRG1 and DRG2. The cofactor is Fe(2+).

The protein resides in the nucleus. Its subcellular location is the cytoplasm. The enzyme catalyses L-lysyl-[protein] + 2-oxoglutarate + O2 = (3S)-3-hydroxy-L-lysyl-[protein] + succinate + CO2. Its function is as follows. Bifunctional enzyme that acts both as an endopeptidase and 2-oxoglutarate-dependent monooxygenase. Endopeptidase that cleaves histones N-terminal tails at the carboxyl side of methylated arginine or lysine residues, to generate 'tailless nucleosomes', which may trigger transcription elongation. Preferentially recognizes and cleaves monomethylated and dimethylated arginine residues of histones H2, H3 and H4. After initial cleavage, continues to digest histones tails via its aminopeptidase activity. Additionally, may play a role in protein biosynthesis by modifying the translation machinery. Acts as a Fe(2+) and 2-oxoglutarate-dependent monooxygenase, catalyzing (S)-stereospecific hydroxylation at C-3 of 'Lys-22' of DRG1 and 'Lys-21' of DRG2 translation factors (TRAFAC), promoting their interaction with ribonucleic acids (RNA). In Mus musculus (Mouse), this protein is Bifunctional peptidase and (3S)-lysyl hydroxylase Jmjd7.